The following is a 692-amino-acid chain: MTREFSLENTRNIGIMAHIDAGKTTATERILYYTGRIHKIGETHEGASQMDWMEQEQERGITITSAATTAQWKGHRVNIIDTPGHVDFTVEVERSLRVLDGAVAVLDAQSGVEPQTETVWRQATTYGVPRIVFVNKMDKIGADFLYSVGTLHDRLQANAHPLQLPIGAEDEFNGIIDLVEECAYMYANDLGTDIERIEIPEEHQELAAEYRGKLIEAVAELDEELMMKYLEGEEISKEELKAAIRKATTSVEFFPVICGSAFKNKGVQLMLDAVIDYLPSPLDVPAIKGIVPDTDEEVERHSSDEEPFSALAFKIMTDPYVGKLTFFRVYSGTLNSGSYVKNSTKGKRERVGRILQMHANSREEISTVYAGDIAAAVGLKDTTTGDTLCDEKNLVILESMEFPEPVISVAIEPKSKADQDKMGTALAKLSEEDPTFRAHTDQETGQTIIAGMGELHLDIIVDRLRREFKVEANVGAPQVAYRETFRAAAKVEGKFARQSGGRGQFGHVWIEFEPNEEGKGFEFENKIVGGVVPREYIPAVQAGLEDALQNGVLAGYPVIDVKAALVDGSYHDVDSSEMAFKIAASMALKAAVSKCNPVILEPMMKVEVVIPEEYMGDIMGDVTSRRGRVEGMEARGNAQVVRAMVPLSEMFGYATALRSNTQGRGTFSMVFDHYEEVPRSISEEIIKKNKGE.

Residues 8 to 282 (ENTRNIGIMA…AVIDYLPSPL (275 aa)) form the tr-type G domain. GTP-binding positions include 17–24 (AHIDAGKT), 81–85 (DTPGH), and 135–138 (NKMD).

It belongs to the TRAFAC class translation factor GTPase superfamily. Classic translation factor GTPase family. EF-G/EF-2 subfamily.

The protein localises to the cytoplasm. Its function is as follows. Catalyzes the GTP-dependent ribosomal translocation step during translation elongation. During this step, the ribosome changes from the pre-translocational (PRE) to the post-translocational (POST) state as the newly formed A-site-bound peptidyl-tRNA and P-site-bound deacylated tRNA move to the P and E sites, respectively. Catalyzes the coordinated movement of the two tRNA molecules, the mRNA and conformational changes in the ribosome. This Bacillus cytotoxicus (strain DSM 22905 / CIP 110041 / 391-98 / NVH 391-98) protein is Elongation factor G.